Here is a 107-residue protein sequence, read N- to C-terminus: L-rhamnose mutarotase (107 aa).

Tyr18 provides a ligand contact to substrate. His22 (proton donor) is an active-site residue. Substrate contacts are provided by residues Tyr41 and 76 to 77; that span reads WW.

The protein belongs to the rhamnose mutarotase family. Homodimer.

Its subcellular location is the cytoplasm. It carries out the reaction alpha-L-rhamnose = beta-L-rhamnose. The protein operates within carbohydrate metabolism; L-rhamnose metabolism. In terms of biological role, involved in the anomeric conversion of L-rhamnose. This Paraburkholderia xenovorans (strain LB400) protein is L-rhamnose mutarotase.